The following is a 501-amino-acid chain: Cytochrome P450 3A31 (501 aa).

Cys-440 is a binding site for heme.

Belongs to the cytochrome P450 family. Heme is required as a cofactor. In terms of tissue distribution, expressed constitutively in liver.

Its subcellular location is the endoplasmic reticulum membrane. The protein localises to the microsome membrane. It carries out the reaction an organic molecule + reduced [NADPH--hemoprotein reductase] + O2 = an alcohol + oxidized [NADPH--hemoprotein reductase] + H2O + H(+). In terms of biological role, cytochromes P450 are a group of heme-thiolate monooxygenases. In liver microsomes, this enzyme is involved in an NADPH-dependent electron transport pathway. It oxidizes a variety of structurally unrelated compounds, including steroids, fatty acids, and xenobiotics. The sequence is that of Cytochrome P450 3A31 (CYP3A31) from Mesocricetus auratus (Golden hamster).